The following is a 398-amino-acid chain: Growth-regulating factor 3 (398 aa).

The segment covering 1–17 (MDLQLKQWRSQQQQQHQ) has biased composition (low complexity). Positions 1–32 (MDLQLKQWRSQQQQQHQTESEEQPSAAKIPKH) are disordered. A QLQ domain is found at 76–111 (FFSWAQWQELELQALIYRYMLAGAAVPQELLLPIKK). The region spanning 144 to 188 (DPEPGRCRRTDGKKWRCSRDVFAGHKYCERHMHRGRNRSRKPVET) is the WRC domain. 2 short sequence motifs (bipartite nuclear localization signal) span residues 149–159 (RCRRTDGKKWR) and 177–184 (RGRNRSRK). Polar residues-rich tracts occupy residues 299 to 350 (SLQE…RDQQ) and 383 to 398 (PTSVLHQLGVSTQAFH). Residues 299–398 (SLQEADNSSS…QLGVSTQAFH (100 aa)) are disordered.

Belongs to the GRF family. As to expression, strongly expressed in actively growing and developing tissues, such as roots, upper stems, and shoot tips containing the shoot apical meristem (SAM) and flower buds. Also expressed in mature flowers, but weakly expressed in mature stems and leaves.

The protein localises to the nucleus. Transcription activator that plays a role in the regulation of cell expansion in leaf and cotyledons tissues. Component of a network formed by miR396, the GRFs and their interacting factors (GIFs) acting in the regulation of meristem function, at least partially through the control of cell proliferation. microRNA396-GRF1/GRF3 regulatory module acts as a developmental regulator in the reprogramming of root cells during cyst nematode infection, leading to the formation of the syncytium. In Arabidopsis thaliana (Mouse-ear cress), this protein is Growth-regulating factor 3 (GRF3).